We begin with the raw amino-acid sequence, 163 residues long: CASP-like protein 1C3 (163 aa).

Residues Met-1 to Lys-6 lie on the Cytoplasmic side of the membrane. A helical membrane pass occupies residues Ile-7–Met-27. The Extracellular segment spans residues Val-28–Lys-52. Asn-38 carries an N-linked (GlcNAc...) asparagine glycan. A helical transmembrane segment spans residues Tyr-53–Phe-73. Topologically, residues Lys-74 to Arg-79 are cytoplasmic. A helical transmembrane segment spans residues Leu-80 to Leu-100. Residues Ala-101–Gln-128 lie on the Extracellular side of the membrane. A helical membrane pass occupies residues Val-129–Cys-149. The Cytoplasmic portion of the chain corresponds to Ser-150–Pro-163.

It belongs to the Casparian strip membrane proteins (CASP) family. As to quaternary structure, homodimer and heterodimers.

The protein localises to the cell membrane. This chain is CASP-like protein 1C3, found in Populus trichocarpa (Western balsam poplar).